The chain runs to 170 residues: Phosphopantetheine adenylyltransferase (170 aa).

A substrate-binding site is contributed by Ser-14. ATP-binding positions include 14-15 (SF) and His-22. 3 residues coordinate substrate: Lys-46, Leu-79, and Arg-93. ATP contacts are provided by residues 94–96 (GIR), Glu-104, and 129–135 (IAEVSST).

It belongs to the bacterial CoaD family. Homohexamer. Mg(2+) is required as a cofactor.

The protein resides in the cytoplasm. It catalyses the reaction (R)-4'-phosphopantetheine + ATP + H(+) = 3'-dephospho-CoA + diphosphate. It participates in cofactor biosynthesis; coenzyme A biosynthesis; CoA from (R)-pantothenate: step 4/5. Its function is as follows. Reversibly transfers an adenylyl group from ATP to 4'-phosphopantetheine, yielding dephospho-CoA (dPCoA) and pyrophosphate. The protein is Phosphopantetheine adenylyltransferase of Neisseria meningitidis serogroup C (strain 053442).